Here is a 469-residue protein sequence, read N- to C-terminus: Flap endonuclease 1-B (469 aa).

An N-domain region spans residues 1–103 (MGIKGLTGLL…GVLSKRLERR (103 aa)). A Mg(2+)-binding site is contributed by D32. Positions 45 and 69 each coordinate DNA. D85, E157, E159, D183, and D185 together coordinate Mg(2+). The interval 121–257 (DVDRFSRRTV…KSALKLIREY (137 aa)) is I-domain. E157 provides a ligand contact to DNA. DNA-binding residues include G235 and D237. Residue D237 participates in Mg(2+) binding. The segment at 274 to 354 (QKAAQAAVES…GGMQIPEEWP (81 aa)) is disordered. Acidic residues-rich tracts occupy residues 282–295 (ESDEESEHEEEDEP) and 302–317 (EMPDPVEEDQDGEEEA). Positions 326 to 342 (PKKKKASSKTKEKRKGK) are enriched in basic residues. The segment at 412 to 420 (QQGRLDGFF) is interaction with PCNA. The segment at 424-469 (PKEKAAAPAPVGKAKGKGKIDAKAKGTKRKVDEKAESSAGKKPRKK) is disordered. The segment covering 441–459 (GKIDAKAKGTKRKVDEKAE) has biased composition (basic and acidic residues).

The protein belongs to the XPG/RAD2 endonuclease family. FEN1 subfamily. As to quaternary structure, interacts with PCNA. Three molecules of FEN1 bind to one PCNA trimer with each molecule binding to one PCNA monomer. PCNA stimulates the nuclease activity without altering cleavage specificity. Requires Mg(2+) as cofactor. Post-translationally, phosphorylated. Phosphorylation upon DNA damage induces relocalization to the nuclear plasma.

Its subcellular location is the nucleus. It localises to the nucleolus. The protein resides in the nucleoplasm. It is found in the mitochondrion. Its function is as follows. Structure-specific nuclease with 5'-flap endonuclease and 5'-3' exonuclease activities involved in DNA replication and repair. During DNA replication, cleaves the 5'-overhanging flap structure that is generated by displacement synthesis when DNA polymerase encounters the 5'-end of a downstream Okazaki fragment. It enters the flap from the 5'-end and then tracks to cleave the flap base, leaving a nick for ligation. Also involved in the long patch base excision repair (LP-BER) pathway, by cleaving within the apurinic/apyrimidinic (AP) site-terminated flap. Acts as a genome stabilization factor that prevents flaps from equilibrating into structures that lead to duplications and deletions. Also possesses 5'-3' exonuclease activity on nicked or gapped double-stranded DNA, and exhibits RNase H activity. Also involved in replication and repair of rDNA and in repairing mitochondrial DNA. The chain is Flap endonuclease 1-B from Laccaria bicolor (strain S238N-H82 / ATCC MYA-4686) (Bicoloured deceiver).